We begin with the raw amino-acid sequence, 237 residues long: Protein GrpE (237 aa).

2 disordered regions span residues 1 to 52 and 200 to 237; these read MSGD…RLQQ and KVSM…EPGV. Over residues 27-40 the composition is skewed to polar residues; that stretch reads ASMNSDEGQPSAQS. The span at 204-218 shows a compositional bias: low complexity; that stretch reads GPGPQSGASPSSAQS.

The protein belongs to the GrpE family. As to quaternary structure, homodimer.

It is found in the cytoplasm. Its function is as follows. Participates actively in the response to hyperosmotic and heat shock by preventing the aggregation of stress-denatured proteins, in association with DnaK and GrpE. It is the nucleotide exchange factor for DnaK and may function as a thermosensor. Unfolded proteins bind initially to DnaJ; upon interaction with the DnaJ-bound protein, DnaK hydrolyzes its bound ATP, resulting in the formation of a stable complex. GrpE releases ADP from DnaK; ATP binding to DnaK triggers the release of the substrate protein, thus completing the reaction cycle. Several rounds of ATP-dependent interactions between DnaJ, DnaK and GrpE are required for fully efficient folding. The polypeptide is Protein GrpE (Prochlorococcus marinus (strain MIT 9303)).